The primary structure comprises 181 residues: ADP-ribosylation factor-like protein 1 (181 aa).

Gly2 carries the N-myristoyl glycine lipid modification. GTP-binding positions include 24 to 31, 45 to 48, Gly70, 126 to 129, and 160 to 161; these read GLDGAGKT, TIPT, NKQD, and AT. Mg(2+) is bound by residues Thr31 and Thr48.

It belongs to the small GTPase superfamily. Arf family. In terms of assembly, the GTP-bound form interacts with GOLGA1. The GTP-bound form interacts with GOLGA4 and RGPD8. The GTP-bound form directly interacts with ARFIP2. Binds to SCOC, preferentially in its GTP-bound form. May interact with UNC119. Interacts with ARFIP1; this interaction directs ARFIP1 to the trans-Golgi membranes. Interacts with ARFGEF1 (via N-terminus). As to expression, detected in heart, liver, lung and liver (at protein level). Detected in fetal heart, lung, liver and kidney. Detected in adult heart, placenta, lung, liver, skeletal muscle, kidney and pancreas.

The protein resides in the golgi apparatus membrane. It localises to the golgi apparatus. The protein localises to the trans-Golgi network membrane. Its subcellular location is the membrane. In terms of biological role, GTP-binding protein that recruits several effectors, such as golgins, arfaptins and Arf-GEFs to the trans-Golgi network, and modulates their functions at the Golgi complex. Plays thereby a role in a wide range of fundamental cellular processes, including cell polarity, innate immunity, or protein secretion mediated by arfaptins, which were shown to play a role in maintaining insulin secretion from pancreatic beta cells. The protein is ADP-ribosylation factor-like protein 1 (ARL1) of Homo sapiens (Human).